Consider the following 168-residue polypeptide: MKRKLKMDNLNINFINDDEHPIPSQDLLLKCLQLVANKHHISHAEVNLNIVSNDEIQQINKQFRNKDKPTNIISFEFEKPQGLPDDIANDFLGDIVIAPAVLENEAKEQNKELNDHWQHIFIHGLLHLLGYDHQDDQEAEVMENLEIQLLAQLGIANPYIEQENQNGR.

Zn(2+) is bound by residues H123, H127, and H133.

It belongs to the endoribonuclease YbeY family. The cofactor is Zn(2+).

Its subcellular location is the cytoplasm. Single strand-specific metallo-endoribonuclease involved in late-stage 70S ribosome quality control and in maturation of the 3' terminus of the 16S rRNA. This is Endoribonuclease YbeY from Francisella tularensis subsp. tularensis (strain SCHU S4 / Schu 4).